A 623-amino-acid chain; its full sequence is Indolepyruvate oxidoreductase subunit IorA (623 aa).

Positions 573, 576, 579, 585, 602, 605, 608, and 612 each coordinate [4Fe-4S] cluster. The region spanning 593-622 is the 4Fe-4S ferredoxin-type domain; the sequence is EKVSIDQSLCVGCAVCAKICPNRAIKPAKS.

In terms of assembly, heterodimer of the IorA and IorB subunits. [4Fe-4S] cluster is required as a cofactor.

The catalysed reaction is indole-3-pyruvate + 2 oxidized [2Fe-2S]-[ferredoxin] + CoA = (indol-3-yl)acetyl-CoA + 2 reduced [2Fe-2S]-[ferredoxin] + CO2 + H(+). Functionally, catalyzes the ferredoxin-dependent oxidative decarboxylation of arylpyruvates. This chain is Indolepyruvate oxidoreductase subunit IorA (iorA), found in Archaeoglobus fulgidus (strain ATCC 49558 / DSM 4304 / JCM 9628 / NBRC 100126 / VC-16).